A 235-amino-acid chain; its full sequence is Cobalt transport protein CbiM (235 aa).

A signal peptide spans 1 to 33 (MRYLKFFLLLVFLVPSFGFSMHIMEGFLPPTHA). 6 helical membrane-spanning segments follow: residues 34 to 51 (LIWY…LFTI), 63 to 83 (MLLA…IPSV), 95 to 115 (LGAI…VLLF), 118 to 138 (LLLA…MAIV), 156 to 176 (NIAV…TTSF), and 199 to 219 (IFAI…VVVI).

Belongs to the CbiM family. As to quaternary structure, forms an energy-coupling factor (ECF) transporter complex composed of an ATP-binding protein (A component, CbiO), a transmembrane protein (T component, CbiQ) and 2 possible substrate-capture proteins (S components, CbiM and CbiN) of unknown stoichimetry.

It localises to the cell inner membrane. It functions in the pathway cofactor biosynthesis; adenosylcobalamin biosynthesis. Functionally, part of the energy-coupling factor (ECF) transporter complex CbiMNOQ involved in cobalt import. The polypeptide is Cobalt transport protein CbiM (Thermosipho melanesiensis (strain DSM 12029 / CIP 104789 / BI429)).